Here is a 371-residue protein sequence, read N- to C-terminus: Cytochrome b (371 aa).

4 helical membrane passes run 25–45 (FGSM…FLAI), 69–90 (WIMQ…YTHI), 105–125 (WLSG…GYVL), and 170–190 (FFAL…IHII). The heme b site is built by His-75 and His-89. The heme b site is built by His-174 and His-188. His-193 provides a ligand contact to a ubiquinone. Transmembrane regions (helical) follow at residues 218–238 (YKDT…LSFT), 280–300 (LGGT…PFTH), 312–332 (LAQT…WTAS), and 339–358 (FIII…IMNP).

This sequence belongs to the cytochrome b family. In terms of assembly, the cytochrome bc1 complex contains 3 respiratory subunits (MT-CYB, CYC1 and UQCRFS1), 2 core proteins (UQCRC1 and UQCRC2) and probably 6 low-molecular weight proteins. The cofactor is heme b.

It localises to the mitochondrion inner membrane. Its function is as follows. Component of the ubiquinol-cytochrome c reductase complex (complex III or cytochrome b-c1 complex) that is part of the mitochondrial respiratory chain. The b-c1 complex mediates electron transfer from ubiquinol to cytochrome c. Contributes to the generation of a proton gradient across the mitochondrial membrane that is then used for ATP synthesis. The chain is Cytochrome b (MT-CYB) from Sinomicrurus macclellandi (Macclelland's coral snake).